We begin with the raw amino-acid sequence, 507 residues long: Proton-coupled zinc antiporter SLC30A1 (507 aa).

Topologically, residues 1 to 10 are cytoplasmic; that stretch reads MGCWGRNRGR. Residues 11 to 31 traverse the membrane as a helical segment; the sequence is LLCMLLLTFMFMVLEVVVSRV. Residues 32–35 are Extracellular-facing; that stretch reads TASL. A helical transmembrane segment spans residues 36–56; that stretch reads AMLSDSFHMLSDVLALVVALV. The Zn(2+) site is built by His43 and Asp47. Residues 57–78 are Cytoplasmic-facing; it reads AERFARRTHATQKNTFGWIRAE. The chain crosses the membrane as a helical span at residues 79 to 99; the sequence is VMGALVNAIFLTGLCFAILLE. The Extracellular segment spans residues 100–113; sequence AVERFIEPHEMQQP. Residues 114–134 traverse the membrane as a helical segment; that stretch reads LVVLSVGVAGLLVNVLGLCLF. At 135–247 the chain is on the cytoplasmic side; sequence HHHSGEGQGA…RAGQLNMRGV (113 aa). Positions 140–218 are disordered; it reads EGQGAGHGHS…EKLRSDDPVD (79 aa). The interval 145–156 is 6 X 2 AA approximate repeats of H-G; it reads GHGHSHGHGHGH. A compositionally biased stretch (basic residues) spans 147 to 165; that stretch reads GHSHGHGHGHLAKGARKAG. Residues 188 to 200 are compositionally biased toward polar residues; that stretch reads TNTLVANTSNSNG. A compositionally biased stretch (basic and acidic residues) spans 204 to 215; sequence DQAEPEKLRSDD. A helical membrane pass occupies residues 248 to 268; it reads FLHVLGDALGSVIVVVNALVF. Residues His250 and Asp254 each contribute to the Zn(2+) site. The Extracellular segment spans residues 269–307; sequence YFSWKGCTEDDFCVNPCFPDPCKSSVELMNSTQAPMHEA. A glycan (N-linked (GlcNAc...) asparagine) is linked at Asn298. The chain crosses the membrane as a helical span at residues 308-328; sequence GPCWVLYLDPTLCIIMVCILL. Topologically, residues 329–507 are cytoplasmic; the sequence is YTTYPLLKES…VPNKQPESSL (179 aa). Position 506 is a phosphoserine (Ser506).

The protein belongs to the cation diffusion facilitator (CDF) transporter (TC 2.A.4) family. SLC30A subfamily. In terms of assembly, homodimer. Interacts with TMEM163. Interacts and forms a complex with TMC6 and TMC8; the interaction regulates zinc transport into the ER. As to expression, widely expressed. Detected in duodenum and jejunum but not in ileum and colon (at protein level). Expressed by neuroglial cells (at protein level).

It is found in the cell membrane. It localises to the basolateral cell membrane. The protein localises to the cytoplasmic vesicle membrane. The protein resides in the cytoplasm. Its subcellular location is the endoplasmic reticulum membrane. It is found in the golgi apparatus membrane. It localises to the nucleus membrane. The enzyme catalyses Zn(2+)(in) + 2 H(+)(out) = Zn(2+)(out) + 2 H(+)(in). Its activity is regulated as follows. Calcium-dependent. Functionally, zinc ion:proton antiporter that could function at the plasma membrane mediating zinc efflux from cells against its electrochemical gradient protecting them from intracellular zinc accumulation and toxicity. Alternatively, could prevent the transport to the plasma membrane of CACNB2, the L-type calcium channels regulatory subunit, through a yet to be defined mechanism. By modulating the expression of these channels at the plasma membrane, could prevent calcium and zinc influx into cells. By the same mechanism, could also prevent L-type calcium channels-mediated heavy metal influx into cells. In some cells, could also function as a zinc ion:proton antiporter mediating zinc entry into the lumen of cytoplasmic vesicles. In macrophages, can increase zinc ions concentration into the lumen of cytoplasmic vesicles containing engulfed bacteria and could help inactivate them. Forms a complex with TMC6/EVER1 and TMC8/EVER2 at the ER membrane of keratynocytes which facilitates zinc uptake into the ER. Down-regulates the activity of transcription factors induced by zinc and cytokines. The polypeptide is Proton-coupled zinc antiporter SLC30A1 (Rattus norvegicus (Rat)).